A 160-amino-acid chain; its full sequence is Single-stranded DNA-binding protein 2 (160 aa).

The SSB domain maps to 2–104 (MNRVVLVGRL…VVAESVQFLE (103 aa)). Residues 107–160 (NNNVEGATSNNYQNKANYSNNNQTSSYRADTSQKSDSFASEGKPIDINEDDLPF) form a disordered region. Low complexity predominate over residues 115-129 (SNNYQNKANYSNNNQ). Residues 130–144 (TSSYRADTSQKSDSF) show a composition bias toward polar residues. Residues 155–160 (EDDLPF) carry the Important for interaction with partner proteins motif.

In terms of assembly, homotetramer.

Functionally, plays an important role in DNA replication, recombination and repair. Binds to ssDNA and to an array of partner proteins to recruit them to their sites of action during DNA metabolism. This is Single-stranded DNA-binding protein 2 (ssb2) from Listeria monocytogenes serovar 1/2a (strain ATCC BAA-679 / EGD-e).